Reading from the N-terminus, the 151-residue chain is MDSAACAAAATPVPALALALAPDLAQAPLALPGLLSPSCLLSSGQEVNGSERGTCLWRPWLSSTNDSPRQMRKLVDLAAGGATAAEVTKAESKFHHPVRLFWPKSRSFDYLYSAGEILLQNFPVQATINLYEDSDSEEEEEDEEQEDEEEK.

A WRPW motif motif is present at residues 57-60 (WRPW). Residues 96 to 131 (HPVRLFWPKSRSFDYLYSAGEILLQNFPVQATINLY) are ripply homology domain. The segment at 130 to 151 (LYEDSDSEEEEEDEEQEDEEEK) is disordered. The segment covering 132-151 (EDSDSEEEEEDEEQEDEEEK) has biased composition (acidic residues).

The protein belongs to the ripply family.

Its subcellular location is the nucleus. Its function is as follows. Plays a role in somitogenesis. Essential for transcriptional repression of the segmental patterning genes, thus terminating the segmentation program in the presomitic mesoderm, and also required for the maintenance of rostrocaudal polarity in somites. This chain is Protein ripply1, found in Homo sapiens (Human).